A 444-amino-acid chain; its full sequence is Tol-Pal system protein TolB (444 aa).

The first 19 residues, 1–19, serve as a signal peptide directing secretion; the sequence is MRNIIYFILLLLFSFKGYA.

It belongs to the TolB family. As to quaternary structure, the Tol-Pal system is composed of five core proteins: the inner membrane proteins TolA, TolQ and TolR, the periplasmic protein TolB and the outer membrane protein Pal. They form a network linking the inner and outer membranes and the peptidoglycan layer.

It is found in the periplasm. Functionally, part of the Tol-Pal system, which plays a role in outer membrane invagination during cell division and is important for maintaining outer membrane integrity. The chain is Tol-Pal system protein TolB from Rickettsia akari (strain Hartford).